The sequence spans 152 residues: Transcriptional regulator MraZ (152 aa).

SpoVT-AbrB domains lie at 5 to 52 (ASAV…PLNQ) and 81 to 124 (ATEC…SESE).

It belongs to the MraZ family. As to quaternary structure, forms oligomers.

The protein resides in the cytoplasm. It is found in the nucleoid. This is Transcriptional regulator MraZ from Histophilus somni (strain 129Pt) (Haemophilus somnus).